We begin with the raw amino-acid sequence, 428 residues long: Aerobic C4-dicarboxylate transport protein (428 aa).

A run of 9 helical transmembrane segments spans residues 5-27, 47-64, 77-99, 141-163, 184-206, 216-238, 289-311, 326-348, and 353-375; these read LFKS…GHYY, MIIA…IAGM, ALLY…VNVV, VIGA…FGFA, VIFG…AMAF, LVQL…VVVL, VVGL…YLTM, IFHQ…GVTG, and VLAA…ILGI.

Belongs to the dicarboxylate/amino acid:cation symporter (DAACS) (TC 2.A.23) family.

The protein resides in the cell inner membrane. Responsible for the transport of dicarboxylates such as succinate, fumarate, and malate from the periplasm across the inner membrane. The chain is Aerobic C4-dicarboxylate transport protein (dctA) from Salmonella typhimurium (strain LT2 / SGSC1412 / ATCC 700720).